A 307-amino-acid polypeptide reads, in one-letter code: UDP-3-O-acyl-N-acetylglucosamine deacetylase (307 aa).

Zn(2+) is bound by residues His79, His239, and Asp243. His266 (proton donor) is an active-site residue.

It belongs to the LpxC family. Requires Zn(2+) as cofactor.

The enzyme catalyses a UDP-3-O-[(3R)-3-hydroxyacyl]-N-acetyl-alpha-D-glucosamine + H2O = a UDP-3-O-[(3R)-3-hydroxyacyl]-alpha-D-glucosamine + acetate. The protein operates within glycolipid biosynthesis; lipid IV(A) biosynthesis; lipid IV(A) from (3R)-3-hydroxytetradecanoyl-[acyl-carrier-protein] and UDP-N-acetyl-alpha-D-glucosamine: step 2/6. Its function is as follows. Catalyzes the hydrolysis of UDP-3-O-myristoyl-N-acetylglucosamine to form UDP-3-O-myristoylglucosamine and acetate, the committed step in lipid A biosynthesis. This Tolumonas auensis (strain DSM 9187 / NBRC 110442 / TA 4) protein is UDP-3-O-acyl-N-acetylglucosamine deacetylase.